A 298-amino-acid chain; its full sequence is Isochorismatase domain-containing protein 1 (298 aa).

A Phosphotyrosine modification is found at Tyr-160. At Lys-279 the chain carries N6-succinyllysine.

The protein belongs to the isochorismatase family.

The sequence is that of Isochorismatase domain-containing protein 1 (ISOC1) from Homo sapiens (Human).